The primary structure comprises 196 residues: Xanthine phosphoribosyltransferase (196 aa).

Residues Leu-26 and Asn-33 each contribute to the xanthine site. 134–138 (ASGEA) lines the 5-phospho-alpha-D-ribose 1-diphosphate pocket. Lys-162 is a xanthine binding site.

Belongs to the purine/pyrimidine phosphoribosyltransferase family. Xpt subfamily. Homodimer.

The protein resides in the cytoplasm. It carries out the reaction XMP + diphosphate = xanthine + 5-phospho-alpha-D-ribose 1-diphosphate. Its pathway is purine metabolism; XMP biosynthesis via salvage pathway; XMP from xanthine: step 1/1. In terms of biological role, converts the preformed base xanthine, a product of nucleic acid breakdown, to xanthosine 5'-monophosphate (XMP), so it can be reused for RNA or DNA synthesis. The chain is Xanthine phosphoribosyltransferase from Moorella thermoacetica (strain ATCC 39073 / JCM 9320).